A 229-amino-acid chain; its full sequence is MATELTWHDVLADEKQQPYFINTLHTVAGERQSGITVYPPQKDVFNAFRFTELGDVKVVILGQDPYHGPGQAHGLAFSVRPGIAPPPSLVNIYKELEASIPGFVRPAHGYLESWARQGVLLLNTVLTVRAGQAHSHASLGWETFTDKVISLINQHREGVVFLLWGSHAQKKGAIIDPQRHHILKAPHPSPLSAHRGFFGCNHFALTNQWLEQHGEKTIDWTPVLPAESE.

Asp64 acts as the Proton acceptor in catalysis.

Belongs to the uracil-DNA glycosylase (UDG) superfamily. UNG family.

It localises to the cytoplasm. It catalyses the reaction Hydrolyzes single-stranded DNA or mismatched double-stranded DNA and polynucleotides, releasing free uracil.. Functionally, excises uracil residues from the DNA which can arise as a result of misincorporation of dUMP residues by DNA polymerase or due to deamination of cytosine. In Salmonella agona (strain SL483), this protein is Uracil-DNA glycosylase.